A 379-amino-acid polypeptide reads, in one-letter code: Mannitol-1-phosphate 5-dehydrogenase (379 aa).

3–14 (ALHFGAGNIGRG) serves as a coordination point for NAD(+).

The protein belongs to the mannitol dehydrogenase family.

It carries out the reaction D-mannitol 1-phosphate + NAD(+) = beta-D-fructose 6-phosphate + NADH + H(+). In Actinobacillus pleuropneumoniae serotype 3 (strain JL03), this protein is Mannitol-1-phosphate 5-dehydrogenase.